Reading from the N-terminus, the 422-residue chain is Histidine--tRNA ligase (422 aa).

It belongs to the class-II aminoacyl-tRNA synthetase family. Homodimer.

The protein resides in the cytoplasm. The enzyme catalyses tRNA(His) + L-histidine + ATP = L-histidyl-tRNA(His) + AMP + diphosphate + H(+). The polypeptide is Histidine--tRNA ligase (Vibrio cholerae serotype O1 (strain ATCC 39541 / Classical Ogawa 395 / O395)).